A 37-amino-acid chain; its full sequence is uncharacterized protein (37 aa).

Residues 1–37 form a disordered region; the sequence is MGQVEKARQGQFARPHHSDSQRRVRAWSRIQRRARSF. Residues 23 to 37 show a composition bias toward basic residues; the sequence is RVRAWSRIQRRARSF.

This is an uncharacterized protein from Bacillus phage phi105 (Bacteriophage phi-105).